The following is a 261-amino-acid chain: Syntaxin-7 (261 aa).

Ser-2 is subject to N-acetylserine. The Cytoplasmic portion of the chain corresponds to 2–238 (SYTPGVGGDP…DYQRKSRKTL (237 aa)). Thr-4 carries the post-translational modification Phosphothreonine. Ser-45 carries the phosphoserine modification. Residues 47 to 69 (ELRQQLQQKQQYTNQLAKETDKY) are a coiled coil. Residue Ser-75 is modified to Phosphoserine. Thr-79 bears the Phosphothreonine mark. Ser-125, Ser-126, Ser-129, and Ser-205 each carry phosphoserine. Positions 129–148 (SGSFPEDSSKERNLVSWESQ) are disordered. Residues 165–227 (LRLIHERESS…QQANQQLSRA (63 aa)) enclose the t-SNARE coiled-coil homology domain. Residues 239-259 (CIIILILVIGVAIISLIIWGL) form a helical; Anchor for type IV membrane protein membrane-spanning segment. Over 260–261 (NH) the chain is Vesicular.

Belongs to the syntaxin family. As to quaternary structure, forms a SNARE complex with VTI1B, STX8 and VAMP8 which functions in the homotypic fusion of late endosomes. Component of the SNARE complex composed of STX7, STX8, VAMP7 and VTI1B that is required for heterotypic fusion of late endosomes with lysosomes. Interacts with VPS11, VPS16 and VPS18. Interacts with VPS33A. Interacts with TPC1. As to expression, highest expression is found in placenta followed by heart, skeletal muscle, kidney and brain. Low expression is found in pancreas, lung and liver.

Its subcellular location is the early endosome membrane. Its function is as follows. May be involved in protein trafficking from the plasma membrane to the early endosome (EE) as well as in homotypic fusion of endocytic organelles. Mediates the endocytic trafficking from early endosomes to late endosomes and lysosomes. This chain is Syntaxin-7 (STX7), found in Homo sapiens (Human).